A 117-amino-acid polypeptide reads, in one-letter code: Appetite-regulating hormone (117 aa).

A signal peptide spans 1-23 (MPSPGTVCSLLLLGMLWLDLAMA). Serine 26 is lipidated: O-decanoyl serine; alternate. Serine 26 is lipidated: O-hexanoyl serine; alternate. Residue serine 26 is the site of O-octanoyl serine; alternate attachment. Residues 29–67 (SPEHQRAQQRKESKKPPAKLQPRALGGWLRPEDGDQAEG) are disordered. Positions 31–43 (EHQRAQQRKESKK) are enriched in basic and acidic residues. Residues 52-75 (ALGGWLRPEDGDQAEGAEDELEIQ) constitute a propeptide, removed in mature form. Leucine 98 is modified (leucine amide). The propeptide at 99 to 117 (GKFLQDILWEEAKEAPADK) is removed in mature form.

This sequence belongs to the motilin family. In terms of processing, O-octanoylated by GOAT/MBOAT4. O-octanoylation is essential for ghrelin activity. Amidation of Leu-98 is essential for obestatin activity.

It is found in the secreted. Functionally, ghrelin is the ligand for growth hormone secretagogue receptor type 1 (GHSR). Induces the release of growth hormone from the pituitary. Has an appetite-stimulating effect, induces adiposity and stimulates gastric acid secretion. Involved in growth regulation. Its function is as follows. Obestatin may be the ligand for GPR39. May have an appetite-reducing effect resulting in decreased food intake. May reduce gastric emptying activity and jejunal motility. In Papio hamadryas (Hamadryas baboon), this protein is Appetite-regulating hormone (GHRL).